We begin with the raw amino-acid sequence, 129 residues long: Small ribosomal subunit protein uS9 (129 aa).

Belongs to the universal ribosomal protein uS9 family.

The protein is Small ribosomal subunit protein uS9 of Chlorobium limicola (strain DSM 245 / NBRC 103803 / 6330).